The primary structure comprises 292 residues: UPF0749 protein Mb1856 (292 aa).

The N-terminal stretch at 1 to 28 (MSENRPEPVAAETSAATTARHSQADAGA) is a signal peptide. The segment at 1–30 (MSENRPEPVAAETSAATTARHSQADAGAHD) is disordered. 3 helical membrane-spanning segments follow: residues 68-88 (VFGT…VTQV), 152-172 (AALS…MITI), and 229-249 (VLSP…AAAM).

This sequence belongs to the UPF0749 family.

It localises to the cell membrane. The chain is UPF0749 protein Mb1856 from Mycobacterium bovis (strain ATCC BAA-935 / AF2122/97).